Reading from the N-terminus, the 711-residue chain is Early transcription factor 82 kDa subunit (711 aa).

This sequence belongs to the poxviridae VETF large subunit family. As to quaternary structure, heterodimer of a 70 kDa and a 82 kDa subunit. Part of the early transcription complex composed of ETF, RAP94, and the DNA-directed RNA polymerase.

Its subcellular location is the virion. Acts with RNA polymerase to initiate transcription from early gene promoters. Is recruited by the RPO-associated protein of 94 kDa (RAP94) to form the early transcription complex, which also contains the core RNA polymerase. ETF heterodimer binds to early gene promoters. The protein is Early transcription factor 82 kDa subunit (VETFL) of Oryctolagus cuniculus (Rabbit).